A 331-amino-acid polypeptide reads, in one-letter code: Adenosine deaminase (331 aa).

His12 and His14 together coordinate Zn(2+). The substrate site is built by His14, Asp16, and Gly170. Zn(2+) is bound at residue His197. The active-site Proton donor is the Glu200. Asp278 is a Zn(2+) binding site.

The protein belongs to the metallo-dependent hydrolases superfamily. Adenosine and AMP deaminases family. Adenosine deaminase subfamily. Zn(2+) is required as a cofactor.

It carries out the reaction adenosine + H2O + H(+) = inosine + NH4(+). It catalyses the reaction 2'-deoxyadenosine + H2O + H(+) = 2'-deoxyinosine + NH4(+). Catalyzes the hydrolytic deamination of adenosine and 2-deoxyadenosine. This is Adenosine deaminase from Shewanella woodyi (strain ATCC 51908 / MS32).